The primary structure comprises 188 residues: Large ribosomal subunit protein uL6 (188 aa).

It belongs to the universal ribosomal protein uL6 family.

The sequence is that of Large ribosomal subunit protein uL6 (RPL9) from Tetrahymena thermophila (strain SB210).